Consider the following 336-residue polypeptide: Fructose-1,6-bisphosphatase class 1 (336 aa).

4 residues coordinate Mg(2+): glutamate 98, aspartate 117, leucine 119, and aspartate 120. Residues 120–123, asparagine 210, and lysine 276 each bind substrate; that span reads DGSS. Glutamate 282 provides a ligand contact to Mg(2+).

It belongs to the FBPase class 1 family. Homotetramer. Requires Mg(2+) as cofactor.

The protein resides in the cytoplasm. It carries out the reaction beta-D-fructose 1,6-bisphosphate + H2O = beta-D-fructose 6-phosphate + phosphate. It participates in carbohydrate biosynthesis; gluconeogenesis. This chain is Fructose-1,6-bisphosphatase class 1, found in Caulobacter vibrioides (strain ATCC 19089 / CIP 103742 / CB 15) (Caulobacter crescentus).